The following is a 208-amino-acid chain: Floral homeotic protein PISTILLATA (208 aa).

One can recognise an MADS-box domain in the interval 3 to 57; sequence RGKIEIKRIENANNRVVTFSKRRNGLVKKAKEITVLCDAKVALIIFASNGKMIDY. Positions 75–117 form a coiled coil; sequence SGKKLWDAKHENLSNEIDRIKKENDSLQLELRHLKGEDIQSLN. The K-box domain maps to 84 to 170; that stretch reads HENLSNEIDR…TFQLQQQEMA (87 aa).

As to quaternary structure, forms a heterodimer with APETALA3, capable of binding to CArG-box sequences. AP3/PI heterodimer binds AP1 or SEP3 to form a ternary complex.

The protein localises to the nucleus. Functionally, probable transcription factor involved in the genetic control of flower development. Is required for normal development of petals and stamens in the wild-type flower. Forms a heterodimer with APETALA3 that is required for autoregulation of both AP3 and PI genes. AP3/PI heterodimer interacts with APETALA1 or SEPALLATA3 to form a ternary complex that could be responsible for the regulation of the genes involved in the flower development. AP3/PI heterodimer activates the expression of NAP. AP3/PI prevents GATA22/GNL and GATA21/GNC expression. This chain is Floral homeotic protein PISTILLATA (PI), found in Arabidopsis thaliana (Mouse-ear cress).